We begin with the raw amino-acid sequence, 395 residues long: uncharacterized protein (395 aa).

Residues 288–318 (VAKGKEIDNAEIEKTIKEYENIEEGIEDIVK) are a coiled coil.

This is an uncharacterized protein from Ostreid herpesvirus 1 (isolate France) (OsHV-1).